Reading from the N-terminus, the 394-residue chain is Keratin, type I cuticular Ha4 (394 aa).

Residues 1–56 are head; the sequence is MSYSCCLPSLGCRTSCSSRPCVPPSCHGYTLPGACNIPANVSNCNWFCEGSFNGSE. Residues 56–367 form the IF rod domain; that stretch reads EKETMQFLND…SLLESEDCKL (312 aa). Residues 57 to 91 are coil 1A; it reads KETMQFLNDRLASYLEKVRQLERDNAELEKLIQER. The tract at residues 92–102 is linker 1; the sequence is SQQQEPLLCPS. Residues 103–203 are coil 1B; sequence YQSYFKTIEE…HEEEVNTLRS (101 aa). Residues 204–219 are linker 12; it reads QLGDRLNVEVDTAPTV. The tract at residues 220-363 is coil 2; sequence DLNQVLNETR…NTYRSLLESE (144 aa). Residues 364 to 394 are tail; it reads DCKLPCNPCATTNASGNSCGPCGTSQKGCCN.

It belongs to the intermediate filament family. In terms of tissue distribution, expressed in the hair follicles.

In Homo sapiens (Human), this protein is Keratin, type I cuticular Ha4 (KRT34).